Here is a 442-residue protein sequence, read N- to C-terminus: Alpha-1,6-mannosyl-glycoprotein 2-beta-N-acetylglucosaminyltransferase (442 aa).

Topologically, residues 1–9 are cytoplasmic; the sequence is MRFRIYKRK. Residues 10-29 traverse the membrane as a helical; Signal-anchor for type II membrane protein segment; sequence VLILTLVVAACGFVLWSSNG. At 30–442 the chain is on the lumenal side; that stretch reads RQRKSDALGP…ELCKSYRRLQ (413 aa). N-linked (GlcNAc...) asparagine glycans are attached at residues Asn64 and Asn81. Substrate-binding positions include 118–122 and Asp149; that span reads QVHNR. Cys191 and Cys205 form a disulfide bridge. Substrate is bound at residue 224-228; the sequence is QTKHH. Asp256 serves as a coordination point for Mn(2+). A disulfide bridge links Cys278 with Cys281. Residue Arg293 participates in substrate binding. 3 disulfides stabilise this stretch: Cys329–Cys352, Cys334–Cys435, and Cys373–Cys381. Residue His369 participates in Mn(2+) binding.

The protein belongs to the glycosyltransferase 16 (GT16) protein family. As to quaternary structure, homodimer. Requires Mn(2+) as cofactor. Detected in liver, lung, testis, kidney, brain, spleen, thymus, uterus and intestine.

It localises to the golgi apparatus membrane. It carries out the reaction an N(4)-{beta-D-GlcNAc-(1-&gt;2)-alpha-D-Man-(1-&gt;3)-[alpha-D-Man-(1-&gt;6)]-beta-D-Man-(1-&gt;4)-beta-D-GlcNAc-(1-&gt;4)-beta-D-GlcNAc}-L-asparaginyl-[protein] + UDP-N-acetyl-alpha-D-glucosamine = N(4)-{beta-D-GlcNAc-(1-&gt;2)-alpha-D-Man-(1-&gt;3)-[beta-D-GlcNAc-(1-&gt;2)-alpha-D-Man-(1-&gt;6)]-beta-D-Man-(1-&gt;4)-beta-D-GlcNAc-(1-&gt;4)-beta-D-GlcNAc}-L-asparaginyl-[protein] + UDP + H(+). It functions in the pathway protein modification; protein glycosylation. Functionally, plays an essential role in protein N-glycosylation. Catalyzes the transfer of N-acetylglucosamine (GlcNAc) onto the free terminal mannose moiety in the core structure of the nascent N-linked glycan chain, giving rise to the second branch in complex glycans. This chain is Alpha-1,6-mannosyl-glycoprotein 2-beta-N-acetylglucosaminyltransferase (Mgat2), found in Mus musculus (Mouse).